Reading from the N-terminus, the 431-residue chain is Glutamyl-tRNA(Gln) amidotransferase subunit A (431 aa).

Active-site charge relay system residues include lysine 55 and serine 130. The active-site Acyl-ester intermediate is the serine 154.

It belongs to the amidase family. GatA subfamily. In terms of assembly, heterotrimer of A, B and C subunits.

It catalyses the reaction L-glutamyl-tRNA(Gln) + L-glutamine + ATP + H2O = L-glutaminyl-tRNA(Gln) + L-glutamate + ADP + phosphate + H(+). Allows the formation of correctly charged Gln-tRNA(Gln) through the transamidation of misacylated Glu-tRNA(Gln) in organisms which lack glutaminyl-tRNA synthetase. The reaction takes place in the presence of glutamine and ATP through an activated gamma-phospho-Glu-tRNA(Gln). In Methanococcus maripaludis (strain DSM 14266 / JCM 13030 / NBRC 101832 / S2 / LL), this protein is Glutamyl-tRNA(Gln) amidotransferase subunit A.